A 301-amino-acid chain; its full sequence is Hydroxymycolate synthase MmaA4 (301 aa).

Residues 42 to 43 (YS), 81 to 83 (GCG), 103 to 108 (TLSKNQ), 132 to 133 (WE), and isoleucine 145 contribute to the S-adenosyl-L-methionine site. Residue cysteine 278 is part of the active site.

This sequence belongs to the CFA/CMAS family. In terms of assembly, monomer.

The protein operates within lipid metabolism; mycolic acid biosynthesis. Its function is as follows. Involved in the biosynthesis of hydroxymycolate, a common precursor of oxygenated mycolic acids (methoxymycolate and ketomycolate). Probably transfers a methyl group from the S-adenosylmethionine (SAM) cofactor and, subsequently or simultaneously, a water molecule onto the double bound of ethylene substrates, leading to the formation of the hydroxylated product at the distal position. This Mycobacterium bovis (strain ATCC BAA-935 / AF2122/97) protein is Hydroxymycolate synthase MmaA4 (cmaA).